The primary structure comprises 511 residues: 2,3-bisphosphoglycerate-independent phosphoglycerate mutase (511 aa).

2 residues coordinate Mn(2+): D12 and S62. S62 functions as the Phosphoserine intermediate in the catalytic mechanism. Residues H123, 152–153 (RD), R184, R190, 259–262 (RADR), and K333 contribute to the substrate site. Residues D401, H405, D442, H443, and H460 each contribute to the Mn(2+) site.

The protein belongs to the BPG-independent phosphoglycerate mutase family. As to quaternary structure, monomer. It depends on Mn(2+) as a cofactor.

The catalysed reaction is (2R)-2-phosphoglycerate = (2R)-3-phosphoglycerate. Its pathway is carbohydrate degradation; glycolysis; pyruvate from D-glyceraldehyde 3-phosphate: step 3/5. Catalyzes the interconversion of 2-phosphoglycerate and 3-phosphoglycerate. This chain is 2,3-bisphosphoglycerate-independent phosphoglycerate mutase, found in Nitratidesulfovibrio vulgaris (strain ATCC 29579 / DSM 644 / CCUG 34227 / NCIMB 8303 / VKM B-1760 / Hildenborough) (Desulfovibrio vulgaris).